We begin with the raw amino-acid sequence, 388 residues long: Na(+)/H(+) antiporter NhaA (388 aa).

Residues 1–11 lie on the Cytoplasmic side of the membrane; that stretch reads MKHLHRFFSSD. Residues 12–31 form a helical membrane-spanning segment; that stretch reads ASGGIILIIAAILAMIMANS. Topologically, residues 32–58 are periplasmic; the sequence is GATSGWYHDFLETPVQLRVGSLEINKN. A helical transmembrane segment spans residues 59–80; the sequence is MLLWINDALMAVFFLLVGLEVK. Residues 81–96 are Cytoplasmic-facing; that stretch reads RELMQGSLASLLQAAF. A helical transmembrane segment spans residues 97 to 116; that stretch reads PVIAAIGGMIVPALLYLAFN. The Periplasmic portion of the chain corresponds to 117-122; it reads YADPIT. Residues 123-130 traverse the membrane as a helical segment; the sequence is REGWAIPA. Residues 131–154 are Cytoplasmic-facing; it reads ATDIAFALGVLALLGSRVPLVLKI. A helical transmembrane segment spans residues 155-176; sequence FLMALAIIDDLGAIIIIALFYT. The Periplasmic portion of the chain corresponds to 177–180; the sequence is NDLS. The helical transmembrane segment at 181–200 threads the bilayer; the sequence is MASLGVAAVAIAVLAVLNLC. At 201-204 the chain is on the cytoplasmic side; sequence GVRR. A helical transmembrane segment spans residues 205–222; it reads TGVYILVGVVLWTAVLKS. A topological domain (periplasmic) is located at residue glycine 223. Residues 224–236 form a helical membrane-spanning segment; it reads VHATLAGVIVGFF. Topologically, residues 237–253 are cytoplasmic; it reads IPLKEKHGRSPAKRLEH. The chain crosses the membrane as a helical span at residues 254-272; sequence VLHPWVAYLILPLFAFANA. At 273–286 the chain is on the periplasmic side; it reads GVSLQGVTLDGLTS. The chain crosses the membrane as a helical span at residues 287-310; sequence ILPLGIIAGLLIGKPLGISLFCWL. Over 311–339 the chain is Cytoplasmic; that stretch reads ALRLKLAHLPEGTTYQQIMVVGILCGIGF. Residues 340-350 form a helical membrane-spanning segment; it reads TMSIFIASLAF. The Periplasmic segment spans residues 351–357; the sequence is GSVDPEL. A helical membrane pass occupies residues 358 to 380; it reads INWAKLGILVGSISSAVIGYSWL. The Cytoplasmic portion of the chain corresponds to 381 to 388; it reads RVRLRPSV.

Belongs to the NhaA Na(+)/H(+) (TC 2.A.33) antiporter family.

The protein resides in the cell inner membrane. The enzyme catalyses Na(+)(in) + 2 H(+)(out) = Na(+)(out) + 2 H(+)(in). Its function is as follows. Na(+)/H(+) antiporter that extrudes sodium in exchange for external protons. This Shigella flexneri serotype 5b (strain 8401) protein is Na(+)/H(+) antiporter NhaA.